We begin with the raw amino-acid sequence, 174 residues long: NADH-quinone oxidoreductase subunit I (174 aa).

2 4Fe-4S ferredoxin-type domains span residues 61-91 (LTVKKDGSLRCTACMLCATNCPAECIKITAA) and 103-132 (ISYEIDILRCVFCGFCEEACPVDAIRLGPE). 8 residues coordinate [4Fe-4S] cluster: Cys-71, Cys-74, Cys-77, Cys-81, Cys-112, Cys-115, Cys-118, and Cys-122.

It belongs to the complex I 23 kDa subunit family. NDH-1 is composed of 14 different subunits. Subunits NuoA, H, J, K, L, M, N constitute the membrane sector of the complex. The cofactor is [4Fe-4S] cluster.

It is found in the cell inner membrane. It catalyses the reaction a quinone + NADH + 5 H(+)(in) = a quinol + NAD(+) + 4 H(+)(out). NDH-1 shuttles electrons from NADH, via FMN and iron-sulfur (Fe-S) centers, to quinones in the respiratory chain. The immediate electron acceptor for the enzyme in this species is believed to be ubiquinone. Couples the redox reaction to proton translocation (for every two electrons transferred, four hydrogen ions are translocated across the cytoplasmic membrane), and thus conserves the redox energy in a proton gradient. This Bdellovibrio bacteriovorus (strain ATCC 15356 / DSM 50701 / NCIMB 9529 / HD100) protein is NADH-quinone oxidoreductase subunit I.